Consider the following 90-residue polypeptide: MAQQVQSEIRYLTPPSVDVKKKKYCRFKKSGIKYIDYKDPEFLKKFLNEQGKILPRRITGTSLKFQRRIAQAVKRARHLALLPFVTDMMK.

It belongs to the bacterial ribosomal protein bS18 family. In terms of assembly, part of the 30S ribosomal subunit. Forms a tight heterodimer with protein bS6.

Functionally, binds as a heterodimer with protein bS6 to the central domain of the 16S rRNA, where it helps stabilize the platform of the 30S subunit. The sequence is that of Small ribosomal subunit protein bS18 from Bacteroides fragilis (strain YCH46).